Here is a 457-residue protein sequence, read N- to C-terminus: Adenylosuccinate synthetase isozyme 2 (457 aa).

GTP contacts are provided by residues 40-46 (GDEGKGK) and 68-70 (GHT). Catalysis depends on aspartate 41, which acts as the Proton acceptor. Residues aspartate 41 and glycine 68 each contribute to the Mg(2+) site. Substrate is bound at residue aspartate 41. IMP contacts are provided by residues 41–44 (DEGK), 66–69 (NAGH), threonine 163, arginine 177, asparagine 256, threonine 271, and arginine 335. Histidine 69 acts as the Proton donor in catalysis. 331 to 337 (VTTGRKR) serves as a coordination point for substrate. GTP contacts are provided by residues arginine 337, 363–365 (KLD), and 445–448 (GVGK).

The protein belongs to the adenylosuccinate synthetase family. In terms of assembly, homodimer. It depends on Mg(2+) as a cofactor.

The protein resides in the cytoplasm. The protein localises to the mitochondrion. The enzyme catalyses IMP + L-aspartate + GTP = N(6)-(1,2-dicarboxyethyl)-AMP + GDP + phosphate + 2 H(+). The protein operates within purine metabolism; AMP biosynthesis via de novo pathway; AMP from IMP: step 1/2. Its activity is regulated as follows. Inhibited competitively by AMP and IMP and non-competitively by fructose 1,6-bisphosphate. Plays an important role in the de novo pathway and in the salvage pathway of purine nucleotide biosynthesis. Catalyzes the first committed step in the biosynthesis of AMP from IMP. This chain is Adenylosuccinate synthetase isozyme 2 (adss2), found in Xenopus laevis (African clawed frog).